Here is a 216-residue protein sequence, read N- to C-terminus: 1-Cys peroxiredoxin PER1 (216 aa).

Residues 4–159 (ITLGDTVPNL…VLRALDSLLM (156 aa)) enclose the Thioredoxin domain. Catalysis depends on Cys-46, which acts as the Cysteine sulfenic acid (-SOH) intermediate. A Bipartite nuclear localization signal motif is present at residues 191–214 (KKMFPQGFKTADLPSKKGYLRHTE).

The protein belongs to the peroxiredoxin family. Prx6 subfamily. In terms of tissue distribution, predominantly expressed in seed. Expressed in endosperm, embryo and aleurone cells. Also detected in young seedlings, abscission zones, stem branching points.

It localises to the nucleus. The protein resides in the cytoplasm. The catalysed reaction is a hydroperoxide + [thioredoxin]-dithiol = an alcohol + [thioredoxin]-disulfide + H2O. Thiol-specific peroxidase that catalyzes the reduction of hydrogen peroxide and organic hydroperoxides to water and alcohols, respectively. Seems to contribute to the inhibition of germination during stress. This Arabidopsis thaliana (Mouse-ear cress) protein is 1-Cys peroxiredoxin PER1 (PER1).